A 240-amino-acid polypeptide reads, in one-letter code: Ribosomal RNA small subunit methyltransferase G (240 aa).

S-adenosyl-L-methionine is bound by residues G77, F82, 128–129 (AE), and R148. A disordered region spans residues 217–240 (EKRSKTPKKYPRKAGTPNKSPLLK).

This sequence belongs to the methyltransferase superfamily. RNA methyltransferase RsmG family.

It is found in the cytoplasm. Its function is as follows. Specifically methylates the N7 position of guanine in position 535 of 16S rRNA. This chain is Ribosomal RNA small subunit methyltransferase G, found in Staphylococcus carnosus (strain TM300).